A 150-amino-acid polypeptide reads, in one-letter code: uncharacterized protein (150 aa).

Residues 1-133 enclose the HTH marR-type domain; it reads MNDILREIGM…ISALLHRVRK (133 aa). The H-T-H motif DNA-binding region spans 47-70; that stretch reads QEKLAEMIKVDRTTAARAIKKLEM.

This is an uncharacterized protein from Bacillus subtilis (strain 168).